Reading from the N-terminus, the 415-residue chain is Transcription factor gsfR2 (415 aa).

A DNA-binding region (zn(2)-C6 fungal-type) is located at residues 9–36 (CITCVQSKRKCDQGLPKCQRCLAKNIHC). A disordered region spans residues 65–91 (AEEPSRGCQLQRSPARPTSPTHSPHAN). Residues 72-88 (CQLQRSPARPTSPTHSP) are compositionally biased toward polar residues.

The protein resides in the nucleus. Its function is as follows. Transcription factor that regulates expression of the gene cluster that mediates the biosynthesis of Griseofulvin, an important antifungal drug that has been in use for a long time for treating dermatophyte infections. In Penicillium aethiopicum, this protein is Transcription factor gsfR2.